An 865-amino-acid chain; its full sequence is Alanine--tRNA ligase (865 aa).

Residues His-554, His-558, Cys-656, and His-660 each contribute to the Zn(2+) site.

Belongs to the class-II aminoacyl-tRNA synthetase family. It depends on Zn(2+) as a cofactor.

Its subcellular location is the cytoplasm. The enzyme catalyses tRNA(Ala) + L-alanine + ATP = L-alanyl-tRNA(Ala) + AMP + diphosphate. Catalyzes the attachment of alanine to tRNA(Ala) in a two-step reaction: alanine is first activated by ATP to form Ala-AMP and then transferred to the acceptor end of tRNA(Ala). Also edits incorrectly charged Ser-tRNA(Ala) and Gly-tRNA(Ala) via its editing domain. This is Alanine--tRNA ligase from Francisella tularensis subsp. tularensis (strain WY96-3418).